A 103-amino-acid chain; its full sequence is UPF0134 protein MPN_484 (103 aa).

The protein belongs to the UPF0134 family.

The protein is UPF0134 protein MPN_484 of Mycoplasma pneumoniae (strain ATCC 29342 / M129 / Subtype 1) (Mycoplasmoides pneumoniae).